The following is a 107-amino-acid chain: Phosphoribosyl-ATP pyrophosphatase (107 aa).

Belongs to the PRA-PH family.

The protein localises to the cytoplasm. It catalyses the reaction 1-(5-phospho-beta-D-ribosyl)-ATP + H2O = 1-(5-phospho-beta-D-ribosyl)-5'-AMP + diphosphate + H(+). It participates in amino-acid biosynthesis; L-histidine biosynthesis; L-histidine from 5-phospho-alpha-D-ribose 1-diphosphate: step 2/9. The sequence is that of Phosphoribosyl-ATP pyrophosphatase (hisE) from Rhizobium meliloti (strain 1021) (Ensifer meliloti).